We begin with the raw amino-acid sequence, 167 residues long: Small ribosomal subunit protein uS5 (167 aa).

The region spanning 12 to 75 is the S5 DRBM domain; it reads LQEKLVQVNR…DAARKNMITV (64 aa).

The protein belongs to the universal ribosomal protein uS5 family. In terms of assembly, part of the 30S ribosomal subunit. Contacts proteins S4 and S8.

With S4 and S12 plays an important role in translational accuracy. Functionally, located at the back of the 30S subunit body where it stabilizes the conformation of the head with respect to the body. This chain is Small ribosomal subunit protein uS5, found in Hahella chejuensis (strain KCTC 2396).